The sequence spans 339 residues: Glycerol-3-phosphate dehydrogenase [NAD(P)+] (339 aa).

The NADPH site is built by S13, W14, and K108. K108, G139, and S141 together coordinate sn-glycerol 3-phosphate. A143 contributes to the NADPH binding site. Sn-glycerol 3-phosphate contacts are provided by K194, D247, S257, R258, and N259. The active-site Proton acceptor is K194. NADPH is bound at residue R258. The NADPH site is built by V282 and E284.

The protein belongs to the NAD-dependent glycerol-3-phosphate dehydrogenase family.

The protein localises to the cytoplasm. It carries out the reaction sn-glycerol 3-phosphate + NAD(+) = dihydroxyacetone phosphate + NADH + H(+). It catalyses the reaction sn-glycerol 3-phosphate + NADP(+) = dihydroxyacetone phosphate + NADPH + H(+). It functions in the pathway membrane lipid metabolism; glycerophospholipid metabolism. Its function is as follows. Catalyzes the reduction of the glycolytic intermediate dihydroxyacetone phosphate (DHAP) to sn-glycerol 3-phosphate (G3P), the key precursor for phospholipid synthesis. The sequence is that of Glycerol-3-phosphate dehydrogenase [NAD(P)+] from Streptococcus equi subsp. equi (strain 4047).